Reading from the N-terminus, the 80-residue chain is Exodeoxyribonuclease 7 small subunit (80 aa).

The protein belongs to the XseB family. As to quaternary structure, heterooligomer composed of large and small subunits.

The protein localises to the cytoplasm. It carries out the reaction Exonucleolytic cleavage in either 5'- to 3'- or 3'- to 5'-direction to yield nucleoside 5'-phosphates.. Its function is as follows. Bidirectionally degrades single-stranded DNA into large acid-insoluble oligonucleotides, which are then degraded further into small acid-soluble oligonucleotides. The protein is Exodeoxyribonuclease 7 small subunit of Escherichia coli O6:K15:H31 (strain 536 / UPEC).